Here is a 429-residue protein sequence, read N- to C-terminus: Threonine synthase (429 aa).

At lysine 108 the chain carries N6-(pyridoxal phosphate)lysine.

This sequence belongs to the threonine synthase family. Pyridoxal 5'-phosphate is required as a cofactor.

The catalysed reaction is O-phospho-L-homoserine + H2O = L-threonine + phosphate. The protein operates within amino-acid biosynthesis; L-threonine biosynthesis; L-threonine from L-aspartate: step 5/5. Functionally, catalyzes the gamma-elimination of phosphate from L-phosphohomoserine and the beta-addition of water to produce L-threonine. The protein is Threonine synthase (thrC) of Buchnera aphidicola subsp. Acyrthosiphon pisum (strain APS) (Acyrthosiphon pisum symbiotic bacterium).